The primary structure comprises 468 residues: A-type ATP synthase subunit B (468 aa).

This sequence belongs to the ATPase alpha/beta chains family. In terms of assembly, has multiple subunits with at least A(3), B(3), C, D, E, F, H, I and proteolipid K(x).

It is found in the cell membrane. Component of the A-type ATP synthase that produces ATP from ADP in the presence of a proton gradient across the membrane. The B chain is a regulatory subunit. The chain is A-type ATP synthase subunit B from Haloferax volcanii (strain ATCC 29605 / DSM 3757 / JCM 8879 / NBRC 14742 / NCIMB 2012 / VKM B-1768 / DS2) (Halobacterium volcanii).